The primary structure comprises 196 residues: Chorion protein S19 (196 aa).

Residues 1–16 (MNTFATLAIFISACLA) form the signal peptide.

This sequence belongs to the chorion protein S19 family.

It is found in the secreted. Its function is as follows. Chorion membrane (egg shell) protein; plays a role in protecting the egg from the environment. The protein is Chorion protein S19 (Cp19) of Drosophila grimshawi (Hawaiian fruit fly).